We begin with the raw amino-acid sequence, 60 residues long: Large ribosomal subunit protein bL32 (60 aa).

The segment at 1-22 is disordered; it reads MAVPARHTSKAKKNKRRTHYKL. The span at 7–20 shows a compositional bias: basic residues; it reads HTSKAKKNKRRTHY.

This sequence belongs to the bacterial ribosomal protein bL32 family.

The sequence is that of Large ribosomal subunit protein bL32 from Streptococcus pyogenes serotype M3 (strain ATCC BAA-595 / MGAS315).